Consider the following 137-residue polypeptide: Nucleoside diphosphate kinase (137 aa).

ATP-binding residues include Lys-9, Phe-58, Arg-86, Thr-92, Arg-103, and Asn-113. Catalysis depends on His-121, which acts as the Pros-phosphohistidine intermediate.

The protein belongs to the NDK family. In terms of assembly, homotetramer. Mg(2+) serves as cofactor.

It is found in the cytoplasm. The catalysed reaction is a 2'-deoxyribonucleoside 5'-diphosphate + ATP = a 2'-deoxyribonucleoside 5'-triphosphate + ADP. It catalyses the reaction a ribonucleoside 5'-diphosphate + ATP = a ribonucleoside 5'-triphosphate + ADP. Its function is as follows. Major role in the synthesis of nucleoside triphosphates other than ATP. The ATP gamma phosphate is transferred to the NDP beta phosphate via a ping-pong mechanism, using a phosphorylated active-site intermediate. The protein is Nucleoside diphosphate kinase of Streptococcus pneumoniae (strain P1031).